A 1272-amino-acid polypeptide reads, in one-letter code: AF4/FMR2 family member 2 (1272 aa).

2 disordered regions span residues I93 to D183 and P200 to E223. Residues S97 to E107 are compositionally biased toward polar residues. A compositionally biased stretch (basic and acidic residues) spans S151–H160. The span at N161–D183 shows a compositional bias: polar residues. Residues A212–E223 show a composition bias toward basic and acidic residues. The residue at position 391 (S391) is a Phosphoserine. Disordered regions lie at residues K418–L491, T535–E687, S779–K829, and P842–N903. Positions V426 to A438 are enriched in pro residues. Low complexity predominate over residues V439–E452. Residue T478 is modified to Phosphothreonine. A compositionally biased stretch (basic and acidic residues) spans E543 to R558. A compositionally biased stretch (polar residues) spans S576–T586. Basic and acidic residues predominate over residues P616–R629. Positions G630–A640 are enriched in basic residues. Over residues P818–K829 the composition is skewed to basic and acidic residues. 2 stretches are compositionally biased toward pro residues: residues C844–P853 and F874–E883.

This sequence belongs to the AF4 family.

The protein localises to the nucleus speckle. Functionally, RNA-binding protein. Might be involved in alternative splicing regulation through an interaction with G-quartet RNA structure. This chain is AF4/FMR2 family member 2 (AFF2), found in Pongo pygmaeus (Bornean orangutan).